The primary structure comprises 978 residues: Glycine dehydrogenase (decarboxylating) (978 aa).

The residue at position 726 (Lys-726) is an N6-(pyridoxal phosphate)lysine.

This sequence belongs to the GcvP family. The glycine cleavage system is composed of four proteins: P, T, L and H. Pyridoxal 5'-phosphate serves as cofactor.

It catalyses the reaction N(6)-[(R)-lipoyl]-L-lysyl-[glycine-cleavage complex H protein] + glycine + H(+) = N(6)-[(R)-S(8)-aminomethyldihydrolipoyl]-L-lysyl-[glycine-cleavage complex H protein] + CO2. Its function is as follows. The glycine cleavage system catalyzes the degradation of glycine. The P protein binds the alpha-amino group of glycine through its pyridoxal phosphate cofactor; CO(2) is released and the remaining methylamine moiety is then transferred to the lipoamide cofactor of the H protein. The protein is Glycine dehydrogenase (decarboxylating) of Paraburkholderia xenovorans (strain LB400).